Consider the following 229-residue polypeptide: Heptaprenylglyceryl phosphate synthase (229 aa).

A sn-glycerol 1-phosphate-binding site is contributed by K12. D14 and S40 together coordinate Mg(2+). Residues Y159–G164, G189, and G209–N210 contribute to the sn-glycerol 1-phosphate site.

The protein belongs to the GGGP/HepGP synthase family. Group I subfamily. Homodimer. It depends on Mg(2+) as a cofactor.

It carries out the reaction sn-glycerol 1-phosphate + all-trans-heptaprenyl diphosphate = 3-heptaprenyl-sn-glycero-1-phosphate + diphosphate. The protein operates within membrane lipid metabolism; glycerophospholipid metabolism. Functionally, prenyltransferase that catalyzes in vivo the transfer of the heptaprenyl moiety of heptaprenyl pyrophosphate (HepPP; 35 carbon atoms) to the C3 hydroxyl of sn-glycerol-1-phosphate (G1P), producing heptaprenylglyceryl phosphate (HepGP). This reaction is an ether-bond-formation step in the biosynthesis of archaea-type G1P-based membrane lipids found in Bacillales. This Bacillus anthracis (strain A0248) protein is Heptaprenylglyceryl phosphate synthase.